A 690-amino-acid polypeptide reads, in one-letter code: Serotransferrin (690 aa).

The N-terminal stretch at 1 to 17 is a signal peptide; the sequence is MKPLLLLTLLGCLAAAL. 2 Transferrin-like domains span residues 24-329 and 340-670; these read VKWC…SLKK and IKWC…SLRK. Residues Cys-27 and Cys-49 are joined by a disulfide bond. Asp-73 and Tyr-103 together coordinate Fe(3+). 3 disulfides stabilise this stretch: Cys-126/Cys-206, Cys-171/Cys-185, and Cys-234/Cys-248. The hydrogencarbonate site is built by Thr-128, Lys-132, Ala-134, and Gly-135. Position 200 (Tyr-200) interacts with Fe(3+). Residue His-256 participates in Fe(3+) binding. Disulfide bonds link Cys-343-Cys-379 and Cys-353-Cys-370. The Fe(3+) site is built by Asp-394 and Tyr-429. 7 disulfides stabilise this stretch: Cys-404-Cys-682, Cys-419-Cys-643, Cys-452-Cys-530, Cys-476-Cys-671, Cys-486-Cys-499, Cys-496-Cys-513, and Cys-570-Cys-584. The hydrogencarbonate site is built by Thr-454, Arg-458, Ala-460, and Gly-461. Tyr-524 is a binding site for Fe(3+). His-592 contributes to the Fe(3+) binding site.

Belongs to the transferrin family. In terms of assembly, monomer.

Its subcellular location is the secreted. In terms of biological role, transferrins are iron binding transport proteins which can bind two Fe(3+) ions in association with the binding of an anion, usually bicarbonate. The polypeptide is Serotransferrin (tf) (Oryzias latipes (Japanese rice fish)).